We begin with the raw amino-acid sequence, 208 residues long: Small ribosomal subunit protein uS3 (208 aa).

One can recognise a KH type-2 domain in the interval 16 to 85; the sequence is IDEYFKKELS…KPQIDVKPVE (70 aa).

This sequence belongs to the universal ribosomal protein uS3 family. Part of the 30S ribosomal subunit.

Its function is as follows. Binds the lower part of the 30S subunit head. The protein is Small ribosomal subunit protein uS3 of Methanocaldococcus jannaschii (strain ATCC 43067 / DSM 2661 / JAL-1 / JCM 10045 / NBRC 100440) (Methanococcus jannaschii).